A 360-amino-acid chain; its full sequence is Phospho-N-acetylmuramoyl-pentapeptide-transferase (360 aa).

Transmembrane regions (helical) follow at residues 26-46 (TILGVLTALGIALMIGPAVIQ), 73-93 (TMGGALILVAIAVSTLLWADL), 98-118 (VWVVLLVTLAFGLIGGVDDAL), 136-156 (LQVLAALAASTFLFATATDPV), 168-188 (WVFPLGLGFIALATLVIVGSS), 199-219 (GLAIMPTVLVATGLAVFAYAS), 235-255 (GVGELVIFCGAIVGAGLGFLW), 263-283 (VFMGDVGALALGAALGVVAVA), 288-308 (IVLFIMGGIFVMETVSVMIQV), and 338-358 (VIVRFWIITVVLVLIGLAMLK).

Belongs to the glycosyltransferase 4 family. MraY subfamily. Requires Mg(2+) as cofactor.

The protein localises to the cell inner membrane. It carries out the reaction UDP-N-acetyl-alpha-D-muramoyl-L-alanyl-gamma-D-glutamyl-meso-2,6-diaminopimeloyl-D-alanyl-D-alanine + di-trans,octa-cis-undecaprenyl phosphate = di-trans,octa-cis-undecaprenyl diphospho-N-acetyl-alpha-D-muramoyl-L-alanyl-D-glutamyl-meso-2,6-diaminopimeloyl-D-alanyl-D-alanine + UMP. Its pathway is cell wall biogenesis; peptidoglycan biosynthesis. Its function is as follows. Catalyzes the initial step of the lipid cycle reactions in the biosynthesis of the cell wall peptidoglycan: transfers peptidoglycan precursor phospho-MurNAc-pentapeptide from UDP-MurNAc-pentapeptide onto the lipid carrier undecaprenyl phosphate, yielding undecaprenyl-pyrophosphoryl-MurNAc-pentapeptide, known as lipid I. This chain is Phospho-N-acetylmuramoyl-pentapeptide-transferase, found in Halorhodospira halophila (strain DSM 244 / SL1) (Ectothiorhodospira halophila (strain DSM 244 / SL1)).